The primary structure comprises 548 residues: Folylpolyglutamate synthase (548 aa).

Residue 130–133 coordinates ATP; sequence GKGS. Mg(2+) is bound by residues serine 157, glutamate 234, and histidine 262. 2 residues coordinate ATP: arginine 382 and aspartate 396.

Belongs to the folylpolyglutamate synthase family. Requires a monovalent cation as cofactor.

The protein localises to the mitochondrion inner membrane. Its subcellular location is the mitochondrion matrix. It is found in the cytoplasm. The catalysed reaction is (6S)-5,6,7,8-tetrahydrofolyl-(gamma-L-Glu)(n) + L-glutamate + ATP = (6S)-5,6,7,8-tetrahydrofolyl-(gamma-L-Glu)(n+1) + ADP + phosphate + H(+). The protein operates within cofactor biosynthesis; tetrahydrofolylpolyglutamate biosynthesis. Its function is as follows. Catalyzes conversion of folates to polyglutamate derivatives allowing concentration of folate compounds in the cell and the intracellular retention of these cofactors, which are important substrates for most of the folate-dependent enzymes that are involved in one-carbon transfer reactions involved in purine, pyrimidine and amino acid synthesis. Required for methionine synthesis and maintenance of intact mitochondrial DNA. Involved in telomere maintenance. This Saccharomyces cerevisiae (strain AWRI1631) (Baker's yeast) protein is Folylpolyglutamate synthase.